Here is a 309-residue protein sequence, read N- to C-terminus: tRNA hydroxylation protein P2 (309 aa).

This sequence belongs to the peptidase U32 family.

In terms of biological role, involved in prephenate-dependent formation of 5-hydroxyuridine (ho5U) modification at position 34 in tRNAs, the first step in 5-methoxyuridine (mo5U) biosynthesis. In Bacillus subtilis (strain 168), this protein is tRNA hydroxylation protein P2.